We begin with the raw amino-acid sequence, 148 residues long: UPF0756 membrane protein KPN78578_11500 (148 aa).

A run of 4 helical transmembrane segments spans residues 14–34 (ALGF…LIIV), 51–71 (LTVG…SGTL), 86–106 (LLAI…VSLM), and 121–141 (VLGV…AGII).

The protein belongs to the UPF0756 family.

The protein localises to the cell membrane. In Klebsiella pneumoniae subsp. pneumoniae (strain ATCC 700721 / MGH 78578), this protein is UPF0756 membrane protein KPN78578_11500.